We begin with the raw amino-acid sequence, 416 residues long: RNA-editing ligase 2, mitochondrial (416 aa).

The transit peptide at 1 to 17 (MLRRLGVRHFRRTPLLF) directs the protein to the mitochondrion. ATP is bound by residues 29–31 (TEI), 56–62 (EKVHGAN), R79, E126, F173, and 269–271 (KFK). The active-site N6-AMP-lysine intermediate is the K57.

This sequence belongs to the RNA ligase 2 family. As to quaternary structure, component of the RNA editing complex, a 1600 kDa complex composed of at least 20 proteins.

It is found in the mitochondrion. The catalysed reaction is ATP + (ribonucleotide)n-3'-hydroxyl + 5'-phospho-(ribonucleotide)m = (ribonucleotide)n+m + AMP + diphosphate.. Functionally, RNA editing in kinetoplastid mitochondria inserts and deletes uridylates at multiple sites in pre-mRNAs as directed by guide RNAs. This Trypanosoma brucei brucei (strain 927/4 GUTat10.1) protein is RNA-editing ligase 2, mitochondrial (REL2).